A 258-amino-acid chain; its full sequence is Thiazole synthase (258 aa).

Catalysis depends on lysine 98, which acts as the Schiff-base intermediate with DXP. 1-deoxy-D-xylulose 5-phosphate contacts are provided by residues glycine 159, 185 to 186, and 207 to 208; these read AG and NT.

It belongs to the ThiG family. Homotetramer. Forms heterodimers with either ThiH or ThiS.

It is found in the cytoplasm. The enzyme catalyses [ThiS sulfur-carrier protein]-C-terminal-Gly-aminoethanethioate + 2-iminoacetate + 1-deoxy-D-xylulose 5-phosphate = [ThiS sulfur-carrier protein]-C-terminal Gly-Gly + 2-[(2R,5Z)-2-carboxy-4-methylthiazol-5(2H)-ylidene]ethyl phosphate + 2 H2O + H(+). The protein operates within cofactor biosynthesis; thiamine diphosphate biosynthesis. Catalyzes the rearrangement of 1-deoxy-D-xylulose 5-phosphate (DXP) to produce the thiazole phosphate moiety of thiamine. Sulfur is provided by the thiocarboxylate moiety of the carrier protein ThiS. In vitro, sulfur can be provided by H(2)S. This chain is Thiazole synthase, found in Bacillus cereus (strain ATCC 14579 / DSM 31 / CCUG 7414 / JCM 2152 / NBRC 15305 / NCIMB 9373 / NCTC 2599 / NRRL B-3711).